A 240-amino-acid polypeptide reads, in one-letter code: Izumo sperm-egg fusion protein 3 (240 aa).

The signal sequence occupies residues 1 to 22 (MGDLWLLLLLPLSLAAFHGVKG). At 23 to 176 (CLECDPKFIE…DDPKKAESRE (154 aa)) the chain is on the extracellular side. The helical transmembrane segment at 177–197 (IGLFLILLAEGVILGGVLLLF) threads the bilayer. At 198-240 (HFCISHQRKMKAIRRSLKTYLEKKLEELMGIKDEKEKDFRGRE) the chain is on the cytoplasmic side.

Belongs to the Izumo family. In terms of assembly, monomer and homodimer.

The protein resides in the cell membrane. This is Izumo sperm-egg fusion protein 3 (IZUMO3) from Bos taurus (Bovine).